Reading from the N-terminus, the 581-residue chain is MIPPVQPDFKSHFTDILRNALNERGLADLNLDIEFARPRQSSHGDYSCNLAMQLAKPLRQKPRDIAQSLATAFSASPYLEKVEIAGAGFINLFLTTSAKQQFSRYVLESGEKFGHSSMGAGEKIQVEFVSANPTGPLHVGHGRGAAFGASLANVLAAAGYSVTREYYINDAGRQMDILALSTWLRYLELNGVASAFPPNAYQGEYVRDMARLIHKAHAGRYVHEPELLFDRVAGAEADTEAALDGLIANAKKLLGQDYAYIHNFVLNEQLGDCRNDLMEFGVTFDIWFSEQSLFDSGGVAQAVHLLEEGNYLYQQDGAKWFRSSHFGDEKDRVVQRENGQFTYFASDIAYHLNKFSRGFDRVIDIWGADHHGYISRVKGAMQALALDPEKLEIALVQFAVLYRDGKKVPMSTRAGEFVTLRELRQEVGTDAARFFYVLRKSDQHLDFDLDLAKSQSTDNPVYYVQYAHARVCSVLEQWGEDPGMLVTADTSALTGAAELSLLQKLIDYPETVEAAAREFSPHLIAFYLKELAGEFHSYYNSTRFLVPEMTVRLARLALVAAVRQVLNNGLKLLGVSAPAKM.

The short motif at 131 to 141 is the 'HIGH' region element; the sequence is ANPTGPLHVGH.

It belongs to the class-I aminoacyl-tRNA synthetase family. As to quaternary structure, monomer.

It localises to the cytoplasm. The enzyme catalyses tRNA(Arg) + L-arginine + ATP = L-arginyl-tRNA(Arg) + AMP + diphosphate. This is Arginine--tRNA ligase from Nitrosospira multiformis (strain ATCC 25196 / NCIMB 11849 / C 71).